A 120-amino-acid chain; its full sequence is Putative gamma-glutamylcyclotransferase MJ1514 (120 aa).

7–10 is a substrate binding site; that stretch reads YGSL. Catalysis depends on Glu74, which acts as the Proton acceptor.

Belongs to the gamma-glutamylcyclotransferase family.

In terms of biological role, putative gamma-glutamylcyclotransferase. In Methanocaldococcus jannaschii (strain ATCC 43067 / DSM 2661 / JAL-1 / JCM 10045 / NBRC 100440) (Methanococcus jannaschii), this protein is Putative gamma-glutamylcyclotransferase MJ1514.